Here is a 1104-residue protein sequence, read N- to C-terminus: Receptor-mediated endocytosis protein 6 (1104 aa).

In terms of domain architecture, Ras-GAP spans 156-389; that stretch reads LKIAQVVCYL…EMMDSLLVEN (234 aa). The interval 663–682 is disordered; sequence SSLAKQPSGMVSSASAQNIP. Residues 966-1104 form the VPS9 domain; the sequence is QKKDKLLQSV…SAVEYIKTIL (139 aa).

Belongs to the GAPVD1 family. In terms of assembly, interacts with GDP-bound rab-5. Interacts with alpha-adaptin.

It localises to the membrane. It is found in the cytoplasmic vesicle. The protein localises to the clathrin-coated vesicle. Its function is as follows. Acts both as a GTPase-activating protein (GAP) and a guanine nucleotide exchange factor (GEF), and participates in endocytosis. Acts by regulating the activation of rab-5 by exchanging bound GDP for free GTP at clathrin coated pits. The sequence is that of Receptor-mediated endocytosis protein 6 (rme-6) from Caenorhabditis briggsae.